We begin with the raw amino-acid sequence, 170 residues long: Adenine phosphoribosyltransferase (170 aa).

This sequence belongs to the purine/pyrimidine phosphoribosyltransferase family. As to quaternary structure, homodimer.

It is found in the cytoplasm. The enzyme catalyses AMP + diphosphate = 5-phospho-alpha-D-ribose 1-diphosphate + adenine. It functions in the pathway purine metabolism; AMP biosynthesis via salvage pathway; AMP from adenine: step 1/1. Catalyzes a salvage reaction resulting in the formation of AMP, that is energically less costly than de novo synthesis. This chain is Adenine phosphoribosyltransferase, found in Bacillus velezensis (strain DSM 23117 / BGSC 10A6 / LMG 26770 / FZB42) (Bacillus amyloliquefaciens subsp. plantarum).